The primary structure comprises 659 residues: UvrABC system protein B (659 aa).

Positions 25-412 constitute a Helicase ATP-binding domain; sequence QSIENGNRGQ…SEIVAEQIIR (388 aa). 38-45 is a binding site for ATP; sequence GVTGSGKT. The short motif at 91–114 is the Beta-hairpin element; sequence YYDYYQPEAYVPQTDTFIEKDASI. The Helicase C-terminal domain occupies 429–582; it reads QIDDLYGEIQ…QMEYNEEHNI (154 aa). The 36-residue stretch at 622–657 folds into the UVR domain; the sequence is EKLIEQYEEEMKEAAKNLQFERAAELRDIIKDLKEN.

This sequence belongs to the UvrB family. Forms a heterotetramer with UvrA during the search for lesions. Interacts with UvrC in an incision complex.

The protein resides in the cytoplasm. The UvrABC repair system catalyzes the recognition and processing of DNA lesions. A damage recognition complex composed of 2 UvrA and 2 UvrB subunits scans DNA for abnormalities. Upon binding of the UvrA(2)B(2) complex to a putative damaged site, the DNA wraps around one UvrB monomer. DNA wrap is dependent on ATP binding by UvrB and probably causes local melting of the DNA helix, facilitating insertion of UvrB beta-hairpin between the DNA strands. Then UvrB probes one DNA strand for the presence of a lesion. If a lesion is found the UvrA subunits dissociate and the UvrB-DNA preincision complex is formed. This complex is subsequently bound by UvrC and the second UvrB is released. If no lesion is found, the DNA wraps around the other UvrB subunit that will check the other stand for damage. The protein is UvrABC system protein B of Clostridium perfringens (strain 13 / Type A).